A 125-amino-acid polypeptide reads, in one-letter code: Large ribosomal subunit protein eL8 (125 aa).

Belongs to the eukaryotic ribosomal protein eL8 family. As to quaternary structure, part of the 50S ribosomal subunit. Probably part of the RNase P complex.

The protein resides in the cytoplasm. Its function is as follows. Multifunctional RNA-binding protein that recognizes the K-turn motif in ribosomal RNA, the RNA component of RNase P, box H/ACA, box C/D and box C'/D' sRNAs. This Nanoarchaeum equitans (strain Kin4-M) protein is Large ribosomal subunit protein eL8.